We begin with the raw amino-acid sequence, 501 residues long: Phenylalanine--tRNA ligase alpha subunit (501 aa).

L-phenylalanine contacts are provided by Thr-340 and Phe-423. Residue Glu-425 coordinates Mg(2+). Phe-448 contacts L-phenylalanine.

The protein belongs to the class-II aminoacyl-tRNA synthetase family. Phe-tRNA synthetase alpha subunit type 2 subfamily. As to quaternary structure, tetramer of two alpha and two beta subunits. The cofactor is Mg(2+).

Its subcellular location is the cytoplasm. It catalyses the reaction tRNA(Phe) + L-phenylalanine + ATP = L-phenylalanyl-tRNA(Phe) + AMP + diphosphate + H(+). The sequence is that of Phenylalanine--tRNA ligase alpha subunit from Methanococcus maripaludis (strain C7 / ATCC BAA-1331).